A 193-amino-acid chain; its full sequence is MFAVLKTGGKQYKVQAGDVLRVEKLAADAGEKVQFNDVLMLGGDAPVVGAPLVDGAAVQAEVIDQIKGEKLIHFVKRRRKHSSQRTKGHRQKLTLVRITEILTSGADKTGVKAATGQAAAGAAAPAAAAPAAAGSDDLTKITGVGPAAAKKLVEAGIGSFAALAALSDEQIAAIDAVKVKPEWVEQAKELAQG.

This sequence belongs to the bacterial ribosomal protein bL21 family. As to quaternary structure, part of the 50S ribosomal subunit. Contacts protein L20.

Functionally, this protein binds to 23S rRNA in the presence of protein L20. The sequence is that of Large ribosomal subunit protein bL21 from Ruegeria pomeroyi (strain ATCC 700808 / DSM 15171 / DSS-3) (Silicibacter pomeroyi).